A 132-amino-acid polypeptide reads, in one-letter code: Ribonuclease P protein component 4 (132 aa).

Cys-67, Cys-70, Cys-96, and Cys-99 together coordinate Zn(2+).

The protein belongs to the eukaryotic/archaeal RNase P protein component 4 family. As to quaternary structure, consists of a catalytic RNA component and at least 4-5 protein subunits. Requires Zn(2+) as cofactor.

Its subcellular location is the cytoplasm. The catalysed reaction is Endonucleolytic cleavage of RNA, removing 5'-extranucleotides from tRNA precursor.. Part of ribonuclease P, a protein complex that generates mature tRNA molecules by cleaving their 5'-ends. The sequence is that of Ribonuclease P protein component 4 from Thermococcus kodakarensis (strain ATCC BAA-918 / JCM 12380 / KOD1) (Pyrococcus kodakaraensis (strain KOD1)).